Consider the following 155-residue polypeptide: Ribosomal RNA large subunit methyltransferase H (155 aa).

Residues L72, G103, and 122-127 (LSPLTL) each bind S-adenosyl-L-methionine.

It belongs to the RNA methyltransferase RlmH family. As to quaternary structure, homodimer.

It localises to the cytoplasm. The enzyme catalyses pseudouridine(1915) in 23S rRNA + S-adenosyl-L-methionine = N(3)-methylpseudouridine(1915) in 23S rRNA + S-adenosyl-L-homocysteine + H(+). Functionally, specifically methylates the pseudouridine at position 1915 (m3Psi1915) in 23S rRNA. This is Ribosomal RNA large subunit methyltransferase H from Haemophilus influenzae (strain PittEE).